The chain runs to 83 residues: Protein kreg-1 (83 aa).

The disordered stretch occupies residues 62-83 (GHHHHHHGHHFGHHHHHHHGHH).

Weakly expressed in the intestine, but expression is up-regulated in response to Cu(2+).

Functionally, plays a role in the stress response to heavy metals such as copper, probably in a fos-1/kgb-1-dependent manner. This chain is Protein kreg-1, found in Caenorhabditis elegans.